Reading from the N-terminus, the 189-residue chain is ECF RNA polymerase sigma-E factor (189 aa).

Residues 1–153 (MAEQLTDQAL…TAITLRELEG (153 aa)) are binds RNAP core. A sigma-70 factor domain-2 region spans residues 25-92 (LVSRYQNKVA…KNYLTAQGRR (68 aa)). A Polymerase core binding motif is present at residues 48 to 61 (DVVQESFIKAYRSI). The tract at residues 129-180 (RIVFDTIHNLPEDLKTAITLRELEGLSYEDIAEIMDCPVGTVRSRIFRAREM) is sigma-70 factor domain-4. The segment at residues 156–175 (YEDIAEIMDCPVGTVRSRIF) is a DNA-binding region (H-T-H motif).

This sequence belongs to the sigma-70 factor family. ECF subfamily. In terms of assembly, interacts transiently with the RNAP catalytic core formed by RpoA, RpoB, RpoC and RpoZ (2 alpha, 1 beta, 1 beta' and 1 omega subunit) to form the RNAP holoenzyme that can initiate transcription. Interacts 1:1 with anti-sigma-E factor RseA which prevents binding to RNAP catalytic core.

It localises to the cytoplasm. Its activity is regulated as follows. ECF sigma-E is held in an inactive form by its cognate anti-sigma factor (RseA) until released by regulated intramembrane proteolysis (RIP). RIP occurs when an extracytoplasmic signal (periplasmic stress and excess LPS) triggers a concerted proteolytic cascade to transmit information and elicit cellular responses. The anti-sigma factor RseA is an inner membrane protein, binding sigma-E in the cytoplasm and RseB in the periplasm. RseA is first cut extracytoplasmically (site-1 protease, S1P, by DegS), then within the membrane itself (site-2 protease, S2P, by RseP), while cytoplasmic proteases (predominantly ClpX-ClpP) finish degrading the regulatory protein, liberating sigma-E. Degradation of RseA requires 2 signals to activate DegS; an outer membrane protein (OMP) signal activates DegS, while an LPS signal causes release of RseB from RseA, freeing RseA to be cleaved. Its function is as follows. Sigma factors are initiation factors that promote the attachment of RNA polymerase (RNAP) to specific initiation sites and are then released. Extracytoplasmic function (ECF) sigma-E controls the envelope stress response, responding to periplasmic protein stress, increased levels of periplasmic lipopolysaccharide (LPS) as well as heat shock and oxidative stress; it controls protein processing in the extracytoplasmic compartment. This Haemophilus influenzae (strain ATCC 51907 / DSM 11121 / KW20 / Rd) protein is ECF RNA polymerase sigma-E factor (rpoE).